A 272-amino-acid chain; its full sequence is Ethanolamine ammonia-lyase small subunit (272 aa).

Adenosylcob(III)alamin contacts are provided by Val161, Glu182, and Cys211.

Belongs to the EutC family. In terms of assembly, the basic unit is a heterodimer which dimerizes to form tetramers. The heterotetramers trimerize; 6 large subunits form a core ring with 6 small subunits projecting outwards. Adenosylcob(III)alamin is required as a cofactor.

It localises to the bacterial microcompartment. It catalyses the reaction ethanolamine = acetaldehyde + NH4(+). The protein operates within amine and polyamine degradation; ethanolamine degradation. Catalyzes the deamination of various vicinal amino-alcohols to oxo compounds. Allows this organism to utilize ethanolamine as the sole source of nitrogen and carbon in the presence of external vitamin B12. This is Ethanolamine ammonia-lyase small subunit from Pseudomonas putida (strain GB-1).